The primary structure comprises 142 residues: Large ribosomal subunit protein uL11 (142 aa).

The protein belongs to the universal ribosomal protein uL11 family. Part of the ribosomal stalk of the 50S ribosomal subunit. Interacts with L10 and the large rRNA to form the base of the stalk. L10 forms an elongated spine to which L12 dimers bind in a sequential fashion forming a multimeric L10(L12)X complex. One or more lysine residues are methylated.

Functionally, forms part of the ribosomal stalk which helps the ribosome interact with GTP-bound translation factors. The polypeptide is Large ribosomal subunit protein uL11 (Shewanella oneidensis (strain ATCC 700550 / JCM 31522 / CIP 106686 / LMG 19005 / NCIMB 14063 / MR-1)).